The primary structure comprises 507 residues: Bifunctional purine biosynthesis protein PurH (507 aa).

One can recognise an MGS-like domain in the interval 1 to 149 (MSESKRIKTA…KNYNDVIIVA (149 aa)).

It belongs to the PurH family.

The catalysed reaction is (6R)-10-formyltetrahydrofolate + 5-amino-1-(5-phospho-beta-D-ribosyl)imidazole-4-carboxamide = 5-formamido-1-(5-phospho-D-ribosyl)imidazole-4-carboxamide + (6S)-5,6,7,8-tetrahydrofolate. It catalyses the reaction IMP + H2O = 5-formamido-1-(5-phospho-D-ribosyl)imidazole-4-carboxamide. It participates in purine metabolism; IMP biosynthesis via de novo pathway; 5-formamido-1-(5-phospho-D-ribosyl)imidazole-4-carboxamide from 5-amino-1-(5-phospho-D-ribosyl)imidazole-4-carboxamide (10-formyl THF route): step 1/1. It functions in the pathway purine metabolism; IMP biosynthesis via de novo pathway; IMP from 5-formamido-1-(5-phospho-D-ribosyl)imidazole-4-carboxamide: step 1/1. In Bacteroides thetaiotaomicron (strain ATCC 29148 / DSM 2079 / JCM 5827 / CCUG 10774 / NCTC 10582 / VPI-5482 / E50), this protein is Bifunctional purine biosynthesis protein PurH.